The chain runs to 260 residues: Purine nucleoside phosphorylase PD_1754 (260 aa).

Zn(2+) contacts are provided by H79, C120, and H137.

Belongs to the purine nucleoside phosphorylase YfiH/LACC1 family. Homodimer. Cu(2+) is required as a cofactor. It depends on Zn(2+) as a cofactor.

It catalyses the reaction adenosine + phosphate = alpha-D-ribose 1-phosphate + adenine. The enzyme catalyses S-methyl-5'-thioadenosine + phosphate = 5-(methylsulfanyl)-alpha-D-ribose 1-phosphate + adenine. The catalysed reaction is inosine + phosphate = alpha-D-ribose 1-phosphate + hypoxanthine. It carries out the reaction adenosine + H2O + H(+) = inosine + NH4(+). In terms of biological role, purine nucleoside enzyme that catalyzes the phosphorolysis of adenosine and inosine nucleosides, yielding D-ribose 1-phosphate and the respective free bases, adenine and hypoxanthine. Also catalyzes the phosphorolysis of S-methyl-5'-thioadenosine into adenine and S-methyl-5-thio-alpha-D-ribose 1-phosphate. Also has adenosine deaminase activity. The protein is Purine nucleoside phosphorylase PD_1754 of Xylella fastidiosa (strain Temecula1 / ATCC 700964).